We begin with the raw amino-acid sequence, 352 residues long: Ion-translocating oxidoreductase complex subunit D (352 aa).

The next 5 membrane-spanning stretches (helical) occupy residues 20-40 (IMLL…WFFG), 42-62 (GTLV…ALVL), 78-109 (ALLT…VIIA), 123-143 (PAMI…TSWL), and 148-168 (IAVN…GHTA). Threonine 187 carries the FMN phosphoryl threonine modification. A run of 5 helical transmembrane segments spans residues 214-234 (ILAG…GVWL), 242-262 (WHIP…GWLF), 267-287 (LAAP…FFIL), 301-321 (LIFG…GGYP), and 322-342 (DGVA…DYYT).

This sequence belongs to the NqrB/RnfD family. The complex is composed of six subunits: RsxA, RsxB, RsxC, RsxD, RsxE and RsxG. Requires FMN as cofactor.

It localises to the cell inner membrane. In terms of biological role, part of a membrane-bound complex that couples electron transfer with translocation of ions across the membrane. Required to maintain the reduced state of SoxR. The sequence is that of Ion-translocating oxidoreductase complex subunit D from Escherichia coli O6:H1 (strain CFT073 / ATCC 700928 / UPEC).